The primary structure comprises 464 residues: UDP-glucose:undecaprenyl-phosphate glucose-1-phosphate transferase (464 aa).

Residues 1 to 15 (MTNLKKRERAKTNAS) lie on the Cytoplasmic side of the membrane. Residues 16-36 (LISMVQRFSDITIMFAGLWLV) traverse the membrane as a helical segment. Over 37-38 (CE) the chain is Periplasmic. Residues 39 to 59 (VSGLSFLYMHLLVALITLVVF) form a helical membrane-spanning segment. Topologically, residues 60 to 80 (QMLGGITDFYRSWRGVRAATE) are cytoplasmic. The chain crosses the membrane as a helical span at residues 81-101 (FALLLQNWTLSVIFSAGLVAF). Residues 102–104 (NND) lie on the Periplasmic side of the membrane. The helical transmembrane segment at 105-125 (FDTQLKIWLAWYALTSIGLVV) threads the bilayer. The Cytoplasmic segment spans residues 126–278 (CRSCIRIGAG…VNRLLKRAED (153 aa)). Residues 279 to 299 (IVLATLILLLISPVLCCIALA) traverse the membrane as a helical segment. At 300-464 (VKLSSPGPVI…FKGFVNKAAY (165 aa)) the chain is on the periplasmic side.

It belongs to the bacterial sugar transferase family.

The protein resides in the cell inner membrane. It carries out the reaction di-trans,octa-cis-undecaprenyl phosphate + UDP-alpha-D-glucose = alpha-D-glucosyl di-trans,octa-cis-undecaprenyl diphosphate + UMP. The protein operates within exopolysaccharide biosynthesis; colanic acid biosynthesis. Functionally, is the initiating enzyme for colanic acid (CA) synthesis. Catalyzes the transfer of the glucose-1-phosphate moiety from UDP-Glc onto the carrier lipid undecaprenyl phosphate (C55-P), forming a phosphoanhydride bond yielding to glucosyl-pyrophosphoryl-undecaprenol (Glc-PP-C55). Also possesses a weak galactose-1-P transferase activity. In Escherichia coli (strain K12), this protein is UDP-glucose:undecaprenyl-phosphate glucose-1-phosphate transferase (wcaJ).